Consider the following 164-residue polypeptide: Large ribosomal subunit protein uL10 (164 aa).

The protein belongs to the universal ribosomal protein uL10 family. Part of the ribosomal stalk of the 50S ribosomal subunit. The N-terminus interacts with L11 and the large rRNA to form the base of the stalk. The C-terminus forms an elongated spine to which L12 dimers bind in a sequential fashion forming a multimeric L10(L12)X complex.

Its function is as follows. Forms part of the ribosomal stalk, playing a central role in the interaction of the ribosome with GTP-bound translation factors. In Photobacterium profundum (strain SS9), this protein is Large ribosomal subunit protein uL10.